A 563-amino-acid chain; its full sequence is CTP synthase (563 aa).

The interval 1-280 (MTKFVFVTGG…DEMICMKLQL (280 aa)) is amidoligase domain. Residue S13 participates in CTP binding. S13 contributes to the UTP binding site. ATP contacts are provided by residues 14 to 19 (SLGKGI) and D71. Positions 71 and 154 each coordinate Mg(2+). CTP-binding positions include 161–163 (DIE), 201–206 (KTKPTQ), and K237. Residues 201–206 (KTKPTQ) and K237 contribute to the UTP site. The Glutamine amidotransferase type-1 domain occupies 305 to 557 (TIAMAGKYTE…IAAALEHHAA (253 aa)). Residue G366 coordinates L-glutamine. Residue C393 is the Nucleophile; for glutamine hydrolysis of the active site. L-glutamine contacts are provided by residues 394 to 397 (LGMQ), E417, and R483. Active-site residues include H530 and E532.

The protein belongs to the CTP synthase family. In terms of assembly, homotetramer.

The enzyme catalyses UTP + L-glutamine + ATP + H2O = CTP + L-glutamate + ADP + phosphate + 2 H(+). It catalyses the reaction L-glutamine + H2O = L-glutamate + NH4(+). It carries out the reaction UTP + NH4(+) + ATP = CTP + ADP + phosphate + 2 H(+). The protein operates within pyrimidine metabolism; CTP biosynthesis via de novo pathway; CTP from UDP: step 2/2. With respect to regulation, allosterically activated by GTP, when glutamine is the substrate; GTP has no effect on the reaction when ammonia is the substrate. The allosteric effector GTP functions by stabilizing the protein conformation that binds the tetrahedral intermediate(s) formed during glutamine hydrolysis. Inhibited by the product CTP, via allosteric rather than competitive inhibition. Its function is as follows. Catalyzes the ATP-dependent amination of UTP to CTP with either L-glutamine or ammonia as the source of nitrogen. Regulates intracellular CTP levels through interactions with the four ribonucleotide triphosphates. The chain is CTP synthase from Leptothrix cholodnii (strain ATCC 51168 / LMG 8142 / SP-6) (Leptothrix discophora (strain SP-6)).